The sequence spans 267 residues: Phosphoethanolamine/phosphocholine phosphatase (267 aa).

The Nucleophile role is filled by Asp32. Residues Asp32 and Asp34 each coordinate Mg(2+). Asp34 serves as the catalytic Proton donor. The substrate site is built by Asp43 and Asp123. Mg(2+) is bound at residue Asp203.

The protein belongs to the HAD-like hydrolase superfamily. PHOSPHO family. It depends on Mg(2+) as a cofactor. As to expression, expressed at sites of mineralization in bone and cartilage. Highly expressed in osteoblast cell line SaOS-2 which produces a mineralized matrix, but not in MG-63 cell line, which do not mineralize.

Its subcellular location is the extracellular vesicle. It catalyses the reaction phosphoethanolamine + H2O = ethanolamine + phosphate. The enzyme catalyses phosphocholine + H2O = choline + phosphate. Phosphatase that has a high activity toward phosphoethanolamine (PEA) and phosphocholine (PCho). Involved in the generation of inorganic phosphate for bone mineralization. Acts in a non-redundant manner with PHOSPHO1 in skeletal mineralization: while PHOSPHO1 mediates the initiation of hydroxyapatite crystallization in the matrix vesicles (MVs), ALPL/TNAP catalyzes the spread of hydroxyapatite crystallization in the extracellular matrix. In Homo sapiens (Human), this protein is Phosphoethanolamine/phosphocholine phosphatase.